Reading from the N-terminus, the 376-residue chain is Ribosomal RNA large subunit methyltransferase G (376 aa).

The protein belongs to the methyltransferase superfamily. RlmG family.

The protein localises to the cytoplasm. The enzyme catalyses guanosine(1835) in 23S rRNA + S-adenosyl-L-methionine = N(2)-methylguanosine(1835) in 23S rRNA + S-adenosyl-L-homocysteine + H(+). In terms of biological role, specifically methylates the guanine in position 1835 (m2G1835) of 23S rRNA. The protein is Ribosomal RNA large subunit methyltransferase G of Vibrio vulnificus (strain CMCP6).